The sequence spans 478 residues: UDP-N-acetylmuramate--L-alanine ligase (478 aa).

G126–T132 contacts ATP.

It belongs to the MurCDEF family.

It localises to the cytoplasm. The catalysed reaction is UDP-N-acetyl-alpha-D-muramate + L-alanine + ATP = UDP-N-acetyl-alpha-D-muramoyl-L-alanine + ADP + phosphate + H(+). Its pathway is cell wall biogenesis; peptidoglycan biosynthesis. Its function is as follows. Cell wall formation. The sequence is that of UDP-N-acetylmuramate--L-alanine ligase from Synechococcus sp. (strain JA-2-3B'a(2-13)) (Cyanobacteria bacterium Yellowstone B-Prime).